Consider the following 680-residue polypeptide: ATPase family AAA domain-containing protein FIGL1 (680 aa).

3 disordered regions span residues 214 to 234 (YGNS…NQDR), 250 to 275 (FGTK…GAPN), and 288 to 352 (VRQK…GGKT). Over residues 295–308 (TESPSSCLSPQSDK) the composition is skewed to polar residues. The span at 313-323 (RGYGSRSGGLR) shows a compositional bias: gly residues. The segment covering 336–346 (TNGNNVGNLTS) has biased composition (polar residues). ATP contacts are provided by residues Ala406 and 446-451 (GTGKTM).

This sequence belongs to the AAA ATPase family. Mg(2+) serves as cofactor.

It localises to the nucleus. The catalysed reaction is ATP + H2O = ADP + phosphate + H(+). Its function is as follows. Involved in DNA double-strand break (DBS) repair via homologous recombination (HR). Limits class II meiotic crossover (CO) formation by regulating the invasion step of meiotic HR. May counteract DMC1 and RAD51-mediated inter-homolog strand invasion to limit CO formation. Functions independently of FANCM. The polypeptide is ATPase family AAA domain-containing protein FIGL1 (Arabidopsis thaliana (Mouse-ear cress)).